A 262-amino-acid chain; its full sequence is Taurine import ATP-binding protein TauB (262 aa).

The ABC transporter domain maps to 4 to 233; that stretch reads LELERISAQY…RYAAGESARA (230 aa). Residue 38–45 participates in ATP binding; that stretch reads GPSGSGKT.

It belongs to the ABC transporter superfamily. Taurine importer (TC 3.A.1.17.1) family. In terms of assembly, the complex is composed of two ATP-binding proteins (TauB), two transmembrane proteins (TauC) and a solute-binding protein (TauA).

The protein resides in the cell inner membrane. The enzyme catalyses taurine(out) + ATP + H2O = taurine(in) + ADP + phosphate + H(+). Functionally, part of the ABC transporter complex TauABC involved in taurine import. Responsible for energy coupling to the transport system. This chain is Taurine import ATP-binding protein TauB, found in Pseudomonas putida (Arthrobacter siderocapsulatus).